Consider the following 739-residue polypeptide: MISAVFGKRRSLSRTLTAGTICAALISGYATMASADDGQGATGEAIIHADDHPGNWMTYGRTYSEQRYSPLDQINRSNVGNLKLAWYLDLDTNRGQEGTPLVIDGVMYATTNWSMMKAVDAATGKLLWSYDPRVPGNIADKGCCDTVNRGAAYWNGKVYFGTFDGRLIALDAKTGKLVWSVNTIPPEAELGKQRSYTVDGAPRIAKGRVIIGNGGSEFGARGFVTAFDAETGKVDWRFFTAPNPKNEPDHTASDSVLMNKAYQTWSPTGAWTRQGGGGTVWDSIVYDPVADLVYLGVGNGSPWNYKYRSEGKGDNLFLGSIVALKPETGEYVWHFQETPMDQWDFTSVQQIMTLDLPINGETRHVIVHAPKNGFFYIIDAKTGEFISGKNYVYVNWASGLDPKTGRPIYNPDALYTLTGKEWYGIPGDLGGHNFAAMAFSPKTGLVYIPAQQVPFLYTNQVGGFTPHPDSWNLGLDMNKVGIPDSPEAKQAFVKDLKGWIVAWDPQKQAEAWRVDHKGPWNGGILATGGDLLFQGLANGEFHAYDATNGSDLFHFAADSGIIAPPVTYLANGKQYVAVEVGWGGIYPFFLGGLARTSGWTVNHSRIIAFSLDGKSGPLPKQNDQGFLPVKPPAQFDSKRTDNGYFQFQTYCAACHGDNAEGAGVLPDLRWSGSIRHEDAFYNVVGRGALTAYGMDRFDGNMNPTEIEDIRQFLIKRANETYQREVDARKNADGIPEQLP.

Residues 1 to 35 form the signal peptide; the sequence is MISAVFGKRRSLSRTLTAGTICAALISGYATMASA. Residue Glu-97 coordinates pyrroloquinoline quinone. An intrachain disulfide couples Cys-143 to Cys-144. Residue Arg-149 participates in pyrroloquinoline quinone binding. Glu-217 contributes to the Ca(2+) binding site. Position 279 (Thr-279) interacts with pyrroloquinoline quinone. Residues Asn-299 and Asp-344 each contribute to the Ca(2+) site. Asp-344 (proton acceptor) is an active-site residue. The pyrroloquinoline quinone site is built by Lys-371 and Ile-585. The Cytochrome c domain occupies 635 to 739; the sequence is FDSKRTDNGY…NADGIPEQLP (105 aa). Heme c-binding residues include Cys-651, Cys-654, His-655, and Met-694.

Belongs to the bacterial PQQ dehydrogenase family. In terms of assembly, the alcohol dehydrogenase multicomponent enzyme system is composed of a dehydrogenase subunit I (AdhA) and a cytochrome c subunit II (AdhB). Pyrroloquinoline quinone serves as cofactor. It depends on Ca(2+) as a cofactor. The cofactor is heme c.

The protein localises to the cell membrane. It catalyses the reaction ethanol + a ubiquinone = a ubiquinol + acetaldehyde. Dehydrogenase component of the alcohol dehydrogenase multicomponent enzyme system which is involved in the production of acetic acid and in the ethanol oxidase respiratory chain. Quinohemoprotein alcohol dehydrogenase (ADH) catalyzes the oxidation of ethanol to acetaldehyde by transferring electrons to the ubiquinone embedded in the membrane phospholipids. The electrons transfer from ethanol to membranous ubiquinone occurs from pyrroloquinoline quinone (PQQ) to one heme c in subunit I (AdhA), and finally to two heme c in subunit II (AdhB). Besides ubiquinone reduction, ADH also has a ubiquinol (QH2) oxidation reaction which mediates electron transfer from ubiquinol to the non-energy generating bypass oxidase system. The electrons transfer occurs from ubiquinol (QH2) to the additional heme c within subunit II (AdhB). This chain is Alcohol dehydrogenase (quinone), dehydrogenase subunit, found in Komagataeibacter europaeus (Gluconacetobacter europaeus).